Consider the following 463-residue polypeptide: Cysteine--tRNA ligase (463 aa).

C28 lines the Zn(2+) pocket. The 'HIGH' region signature appears at 30–40 (ITIYDLCHIGH). Zn(2+)-binding residues include C209, H234, and E238. Residues 266 to 270 (KMSKS) carry the 'KMSKS' region motif. K269 lines the ATP pocket.

The protein belongs to the class-I aminoacyl-tRNA synthetase family. In terms of assembly, monomer. Zn(2+) is required as a cofactor.

It localises to the cytoplasm. The enzyme catalyses tRNA(Cys) + L-cysteine + ATP = L-cysteinyl-tRNA(Cys) + AMP + diphosphate. This Proteus mirabilis (strain HI4320) protein is Cysteine--tRNA ligase.